The sequence spans 89 residues: Small ribosomal subunit protein uS15 (89 aa).

This sequence belongs to the universal ribosomal protein uS15 family. Part of the 30S ribosomal subunit. Forms a bridge to the 50S subunit in the 70S ribosome, contacting the 23S rRNA.

One of the primary rRNA binding proteins, it binds directly to 16S rRNA where it helps nucleate assembly of the platform of the 30S subunit by binding and bridging several RNA helices of the 16S rRNA. In terms of biological role, forms an intersubunit bridge (bridge B4) with the 23S rRNA of the 50S subunit in the ribosome. The sequence is that of Small ribosomal subunit protein uS15 from Rhizobium leguminosarum bv. trifolii (strain WSM2304).